The following is a 595-amino-acid chain: Aspartate--tRNA(Asp/Asn) ligase (595 aa).

Glutamate 174 contributes to the L-aspartate binding site. Residues glutamine 198–lysine 201 are aspartate. Arginine 220 provides a ligand contact to L-aspartate. ATP is bound by residues arginine 220–glutamate 222 and glutamine 229. Histidine 456 contacts L-aspartate. Glutamate 486 is a binding site for ATP. An L-aspartate-binding site is contributed by arginine 493. An ATP-binding site is contributed by glycine 538 to arginine 541.

This sequence belongs to the class-II aminoacyl-tRNA synthetase family. Type 1 subfamily. As to quaternary structure, homodimer.

The protein resides in the cytoplasm. It carries out the reaction tRNA(Asx) + L-aspartate + ATP = L-aspartyl-tRNA(Asx) + AMP + diphosphate. Its function is as follows. Aspartyl-tRNA synthetase with relaxed tRNA specificity since it is able to aspartylate not only its cognate tRNA(Asp) but also tRNA(Asn). Reaction proceeds in two steps: L-aspartate is first activated by ATP to form Asp-AMP and then transferred to the acceptor end of tRNA(Asp/Asn). In Gloeobacter violaceus (strain ATCC 29082 / PCC 7421), this protein is Aspartate--tRNA(Asp/Asn) ligase.